We begin with the raw amino-acid sequence, 87 residues long: Beta-mammal toxin Css4 (87 aa).

Positions 1–19 (MNSLLMITACLALVGTVWA) are cleaved as a signal peptide. An LCN-type CS-alpha/beta domain is found at 20 to 85 (KEGYLVNSYT…VWPLPNKTCN (66 aa)). Cystine bridges form between C31-C84, C35-C60, C44-C65, and C48-C67. N85 carries the asparagine amide modification.

Belongs to the long (4 C-C) scorpion toxin superfamily. Sodium channel inhibitor family. Beta subfamily. In terms of tissue distribution, expressed by the venom gland.

Its subcellular location is the secreted. Functionally, beta toxins bind voltage-independently at site-4 of sodium channels (Nav) and shift the voltage of activation toward more negative potentials thereby affecting sodium channel activation and promoting spontaneous and repetitive firing. This toxin is active only on mammals. In Centruroides suffusus (Durango bark scorpion), this protein is Beta-mammal toxin Css4.